We begin with the raw amino-acid sequence, 104 residues long: Pyrimidine/purine nucleoside phosphorylase (104 aa).

It belongs to the nucleoside phosphorylase PpnP family.

It catalyses the reaction a purine D-ribonucleoside + phosphate = a purine nucleobase + alpha-D-ribose 1-phosphate. The enzyme catalyses adenosine + phosphate = alpha-D-ribose 1-phosphate + adenine. It carries out the reaction cytidine + phosphate = cytosine + alpha-D-ribose 1-phosphate. The catalysed reaction is guanosine + phosphate = alpha-D-ribose 1-phosphate + guanine. It catalyses the reaction inosine + phosphate = alpha-D-ribose 1-phosphate + hypoxanthine. The enzyme catalyses thymidine + phosphate = 2-deoxy-alpha-D-ribose 1-phosphate + thymine. It carries out the reaction uridine + phosphate = alpha-D-ribose 1-phosphate + uracil. The catalysed reaction is xanthosine + phosphate = alpha-D-ribose 1-phosphate + xanthine. Its function is as follows. Catalyzes the phosphorolysis of diverse nucleosides, yielding D-ribose 1-phosphate and the respective free bases. Can use uridine, adenosine, guanosine, cytidine, thymidine, inosine and xanthosine as substrates. Also catalyzes the reverse reactions. The chain is Pyrimidine/purine nucleoside phosphorylase from Hydrogenovibrio crunogenus (strain DSM 25203 / XCL-2) (Thiomicrospira crunogena).